The chain runs to 907 residues: Valine--tRNA ligase (907 aa).

Positions 45-55 (PNVTGSLHMGH) match the 'HIGH' region motif. A 'KMSKS' region motif is present at residues 554–558 (KMSKS). Lys557 contacts ATP. The stretch at 838–870 (GQLIDLEAERARLMKDVSKIEQDIEKLSAKLSN) forms a coiled coil.

It belongs to the class-I aminoacyl-tRNA synthetase family. ValS type 1 subfamily. Monomer.

The protein localises to the cytoplasm. It carries out the reaction tRNA(Val) + L-valine + ATP = L-valyl-tRNA(Val) + AMP + diphosphate. In terms of biological role, catalyzes the attachment of valine to tRNA(Val). As ValRS can inadvertently accommodate and process structurally similar amino acids such as threonine, to avoid such errors, it has a 'posttransfer' editing activity that hydrolyzes mischarged Thr-tRNA(Val) in a tRNA-dependent manner. This Bartonella henselae (strain ATCC 49882 / DSM 28221 / CCUG 30454 / Houston 1) (Rochalimaea henselae) protein is Valine--tRNA ligase.